Consider the following 301-residue polypeptide: MADNSSDEYEEDNKEKKKPSQLTPQQGFSENDDDDDDDSSETDSDDDDDDEEHGAPLEGAYDPADYEHLPVSAEIKELFEYISRYTPQLIDLDHKLKPFIPDFIPAVGDIDAFLKVPRPDGKPDHLGLLVLDEPSTKQSDPTVLSLWLTENSKQHNITQHMKVKSLEDAEKNPKAIDTWIESISELHRSKPPATVHYTRPMPDIDTLMQEWSPEFEELLGKVSLPTVEIDCSLAEYIDMICAILDIPFYKSRIQSLHLLFSLYSEFKNSQHFKALAEGKKVFTPPPNSASQAGDAETLTFI.

Composition is skewed to acidic residues over residues 1-12 and 30-52; these read MADNSSDEYEED and ENDD…DDEE. Residues 1–66 form a disordered region; it reads MADNSSDEYE…LEGAYDPADY (66 aa). Thr283 carries the post-translational modification Phosphothreonine.

Belongs to the IFT46 family. As to quaternary structure, component of the IFT complex B, at least composed of IFT20, IFT22, IFT25, IFT27, IFT46, IFT52, TRAF3IP1/IFT54, IFT57, IFT74, IFT80, IFT81, and IFT88. Interacts with IFT57, IFT88 and DAW1. Interacts with ARL13B. Interacts with IFT56. Interacts with TTC25. Interacts with IFT70B. In terms of tissue distribution, strongly expressed in ovary and testis, moderately expressed in kidney and brain, and weakly expressed in thymus, heart, lung, liver, spleen and muscle. Expressed in embryonic bone and cartilage, with high expression in non-hypertrophic chondrocytes and weaker expression in hypertrophic chondrocytes.

It localises to the cytoplasm. The protein localises to the cytoskeleton. Its subcellular location is the cilium basal body. The protein resides in the cell projection. It is found in the cilium. Forms part of a complex involved in intraflagellar transport (IFT), the bi-directional movement of particles required for the assembly, maintenance and functioning of primary cilia. May play a role in chondrocyte maturation and skeletogenesis. In Mus musculus (Mouse), this protein is Intraflagellar transport protein 46 homolog (Ift46).